Reading from the N-terminus, the 672-residue chain is Nuclear hormone receptor family member nhr-5 (672 aa).

The span at 1–19 shows a compositional bias: low complexity; sequence MSSGGNSSNVNRNSGSSNV. Residues 1–38 form a disordered region; that stretch reads MSSGGNSSNVNRNSGSSNVITLNDSDEETEDSNLGSSS. Residues 40 to 115 constitute a DNA-binding region (nuclear receptor); sequence TNLCKVCGAE…EGMNPAYVRP (76 aa). 2 consecutive NR C4-type zinc fingers follow at residues 43–63 and 79–98; these read CKVCGAEKAALHYGALSCVGC and CAANGECTVSVLQKTQCRSC. In terms of domain architecture, NR LBD spans 155–424; that stretch reads EMRTILMTLL…PLLTDLFGCF (270 aa). Residues 550–577 are disordered; sequence NIQGPSHLPQCGSTVTQRPTVPSSTTSS. Residues 562-577 are compositionally biased toward low complexity; it reads STVTQRPTVPSSTTSS.

This sequence belongs to the nuclear hormone receptor family.

It localises to the nucleus. Functionally, orphan nuclear receptor. This is Nuclear hormone receptor family member nhr-5 (nhr-5) from Caenorhabditis elegans.